The chain runs to 350 residues: Arabinogalactan endo-beta-1,4-galactanase (350 aa).

The N-terminal stretch at 1–16 (MFASLLLAALPLLTHA) is a signal peptide. A glycan (N-linked (GlcNAc...) asparagine) is linked at Asn-128. Glu-152 acts as the Proton donor in catalysis. Glu-262 serves as the catalytic Nucleophile.

Belongs to the glycosyl hydrolase 53 family. Post-translationally, glycosylated.

It catalyses the reaction The enzyme specifically hydrolyzes (1-&gt;4)-beta-D-galactosidic linkages in type I arabinogalactans.. This Aspergillus aculeatus protein is Arabinogalactan endo-beta-1,4-galactanase (gal1).